Consider the following 381-residue polypeptide: MTTYQKIIPIANQILKKYDLCDHCLGRLFTKQLYLSSNKLLGKKLKKNSKSSQRCYICKNLFDNLNYFLNMMIDSASHYSYSSFSVGATIKPSIIDRDDVIRSKYKLKGIDGIKTDVTKELGKLFSKKTKKSFDSLDPEIVFTVNLKDEFCDIRSKSLTLSGRYVKPVRGFLQKQKSCSNCSGKGCRICDFHGIKEFDSVEGEISQFLFKKLGGTTAKFTWIGGEDKSSLILGTGRPFFVKIQNPHKRKLRAKSANLEHIKVSNFKIVADSPKKPLKFNSSVEARISTSSIIDAKLLRKLKNLTKKPIAVYEKSGKRSEKRILSIKYKKSDETSFTLFFKFEGGLPVKRFVTGDDVSPGISQILDMSCKCLEFDFHDVEVK.

The active-site Nucleophile is Asp226.

Belongs to the pseudouridine synthase Pus10 family.

It carries out the reaction uridine(54) in tRNA = pseudouridine(54) in tRNA. It catalyses the reaction uridine(55) in tRNA = pseudouridine(55) in tRNA. Responsible for synthesis of pseudouridine from uracil-54 and uracil-55 in the psi GC loop of transfer RNAs. The chain is tRNA pseudouridine synthase Pus10 from Nitrosopumilus maritimus (strain SCM1).